The primary structure comprises 634 residues: Factor of DNA methylation 5 (634 aa).

The stretch at 254–469 forms a coiled coil; the sequence is IVVDDLANKI…EDTNSALMVK (216 aa).

Acts in association with FDM3 and FDM4 for RNA-directed DNA methylation (RdDM). This Arabidopsis thaliana (Mouse-ear cress) protein is Factor of DNA methylation 5.